Reading from the N-terminus, the 171-residue chain is Shikimate kinase (171 aa).

Position 14–19 (14–19 (GAGKST)) interacts with ATP. S18 contacts Mg(2+). Substrate-binding residues include D36, R60, and G82. R120 contacts ATP. Residue R139 coordinates substrate. Residue Q156 participates in ATP binding.

Belongs to the shikimate kinase family. As to quaternary structure, monomer. It depends on Mg(2+) as a cofactor.

It localises to the cytoplasm. It catalyses the reaction shikimate + ATP = 3-phosphoshikimate + ADP + H(+). It participates in metabolic intermediate biosynthesis; chorismate biosynthesis; chorismate from D-erythrose 4-phosphate and phosphoenolpyruvate: step 5/7. Catalyzes the specific phosphorylation of the 3-hydroxyl group of shikimic acid using ATP as a cosubstrate. The protein is Shikimate kinase of Shewanella sediminis (strain HAW-EB3).